A 423-amino-acid chain; its full sequence is Phosphoribosylamine--glycine ligase (423 aa).

The ATP-grasp domain maps to 107 to 312; it reads KDLCARYGIP…LLPLLYAAAT (206 aa). 133–193 is a binding site for ATP; the sequence is IREEGAPIVI…EAYLDGEEAS (61 aa). Mg(2+) is bound by residues E282 and N284.

This sequence belongs to the GARS family. Mg(2+) serves as cofactor. The cofactor is Mn(2+).

The enzyme catalyses 5-phospho-beta-D-ribosylamine + glycine + ATP = N(1)-(5-phospho-beta-D-ribosyl)glycinamide + ADP + phosphate + H(+). Its pathway is purine metabolism; IMP biosynthesis via de novo pathway; N(1)-(5-phospho-D-ribosyl)glycinamide from 5-phospho-alpha-D-ribose 1-diphosphate: step 2/2. The chain is Phosphoribosylamine--glycine ligase from Rhizobium meliloti (strain 1021) (Ensifer meliloti).